Here is a 301-residue protein sequence, read N- to C-terminus: Homoserine O-acetyltransferase (301 aa).

The active-site Acyl-thioester intermediate is Cys-142. Positions 163 and 192 each coordinate substrate. His-235 (proton acceptor) is an active-site residue. Glu-237 is an active-site residue. Arg-249 contributes to the substrate binding site.

It belongs to the MetA family. As to quaternary structure, homodimer.

Its subcellular location is the cytoplasm. It catalyses the reaction L-homoserine + acetyl-CoA = O-acetyl-L-homoserine + CoA. Its pathway is amino-acid biosynthesis; L-methionine biosynthesis via de novo pathway; O-acetyl-L-homoserine from L-homoserine: step 1/1. Its function is as follows. Transfers an acetyl group from acetyl-CoA to L-homoserine, forming acetyl-L-homoserine. Utilizes a ping-pong kinetic mechanism in which the acetyl group of acetyl-CoA is initially transferred to the enzyme to form an acetyl-enzyme intermediate before subsequent transfer to homoserine to form the final product, O-acetylhomoserine. Cannot use succinyl-CoA as the acyl donor. The protein is Homoserine O-acetyltransferase of Bacillus cereus (strain ATCC 10987 / NRS 248).